The following is a 1065-amino-acid chain: Carbamoyl phosphate synthase large chain (1065 aa).

The carboxyphosphate synthetic domain stretch occupies residues 1–401 (MPLDKTIKKV…ALLKAVTSLE (401 aa)). ATP-binding residues include Arg-129, Arg-169, Gly-175, Gly-176, Gln-208, Val-210, Glu-215, Gly-241, Val-242, His-243, Gln-284, and Glu-298. Residues 133-327 (KNLMEEIDEP…IAKIAAKIAV (195 aa)) form the ATP-grasp 1 domain. Mg(2+)-binding residues include Gln-284, Glu-298, and Asn-300. Mn(2+) contacts are provided by Gln-284, Glu-298, and Asn-300. The interval 402–548 (GKISGLRLEK…YSSYENEDEN (147 aa)) is oligomerization domain. The carbamoyl phosphate synthetic domain stretch occupies residues 549–931 (EVTDDKKIVV…AIYKGFRAAG (383 aa)). Residues 673–863 (SELLKELNIP…MVKLAVEILT (191 aa)) enclose the ATP-grasp 2 domain. The ATP site is built by Arg-709, Lys-748, Ile-750, Glu-754, Gly-779, Val-780, His-781, Ser-782, Gln-822, and Glu-834. Mg(2+) is bound by residues Gln-822, Glu-834, and Asn-836. Gln-822, Glu-834, and Asn-836 together coordinate Mn(2+). An MGS-like domain is found at 932–1065 (IEVPKDGGNL…EYRAMKEYFK (134 aa)). The interval 932 to 1065 (IEVPKDGGNL…EYRAMKEYFK (134 aa)) is allosteric domain.

It belongs to the CarB family. Composed of two chains; the small (or glutamine) chain promotes the hydrolysis of glutamine to ammonia, which is used by the large (or ammonia) chain to synthesize carbamoyl phosphate. Tetramer of heterodimers (alpha,beta)4. Mg(2+) serves as cofactor. The cofactor is Mn(2+).

The enzyme catalyses hydrogencarbonate + L-glutamine + 2 ATP + H2O = carbamoyl phosphate + L-glutamate + 2 ADP + phosphate + 2 H(+). The catalysed reaction is hydrogencarbonate + NH4(+) + 2 ATP = carbamoyl phosphate + 2 ADP + phosphate + 2 H(+). It participates in amino-acid biosynthesis; L-arginine biosynthesis; carbamoyl phosphate from bicarbonate: step 1/1. Its pathway is pyrimidine metabolism; UMP biosynthesis via de novo pathway; (S)-dihydroorotate from bicarbonate: step 1/3. Functionally, large subunit of the glutamine-dependent carbamoyl phosphate synthetase (CPSase). CPSase catalyzes the formation of carbamoyl phosphate from the ammonia moiety of glutamine, carbonate, and phosphate donated by ATP, constituting the first step of 2 biosynthetic pathways, one leading to arginine and/or urea and the other to pyrimidine nucleotides. The large subunit (synthetase) binds the substrates ammonia (free or transferred from glutamine from the small subunit), hydrogencarbonate and ATP and carries out an ATP-coupled ligase reaction, activating hydrogencarbonate by forming carboxy phosphate which reacts with ammonia to form carbamoyl phosphate. This is Carbamoyl phosphate synthase large chain from Clostridium acetobutylicum (strain ATCC 824 / DSM 792 / JCM 1419 / IAM 19013 / LMG 5710 / NBRC 13948 / NRRL B-527 / VKM B-1787 / 2291 / W).